The following is a 205-amino-acid chain: High frequency lysogenization protein HflD homolog (205 aa).

This sequence belongs to the HflD family.

It localises to the cytoplasm. Its subcellular location is the cell inner membrane. The sequence is that of High frequency lysogenization protein HflD homolog from Haemophilus influenzae (strain PittEE).